We begin with the raw amino-acid sequence, 154 residues long: MTPGLLTTAGAGRPRDRCARIVCTVFIETAVVATMFVALLGLSTISSKADDIDWDAIAQCESGGNWAANTGNGLYGGLQISQATWDSNGGVGSPAAASPQQQIEVADNIMKTQGPGAWPKCSSCSQGDAPLGSLTHILTFLAAETGGCSGSRDD.

Residues 21-41 traverse the membrane as a helical segment; the sequence is IVCTVFIETAVVATMFVALLG.

It belongs to the transglycosylase family. Rpf subfamily.

It localises to the cell membrane. Its function is as follows. Factor that stimulates resuscitation of dormant cells. Has peptidoglycan (PG) hydrolytic activity. PG fragments could either directly activate the resuscitation pathway of dormant bacteria or serve as a substrate for endogenous Rpf, resulting in low molecular weight products with resuscitation activity. This Mycobacterium tuberculosis (strain CDC 1551 / Oshkosh) protein is Resuscitation-promoting factor RpfD (rpfD).